Here is a 160-residue protein sequence, read N- to C-terminus: Fimbrial protein (160 aa).

The propeptide at 1-7 is leader sequence; the sequence is MKSLQKG. An N-methylphenylalanine modification is found at phenylalanine 8. A helical membrane pass occupies residues 8–28; it reads FTLIELMIVVAIIGILAAFAI.

It belongs to the N-Me-Phe pilin family. As to quaternary structure, the pili are polar flexible filaments of about 5.4 nanometers diameter and 2.5 micrometers average length; they consist of only a single polypeptide chain arranged in a helical configuration of five subunits per turn in the assembled pilus.

It is found in the fimbrium. Its subcellular location is the membrane. This chain is Fimbrial protein (fimA), found in Dichelobacter nodosus (Bacteroides nodosus).